The sequence spans 362 residues: MAHLKNLPWELIEEILSRVPPKSLVRFRTVSKQWNALFDDKTFINNHKMTFRFILATKSKIYSVSIDPVIVVRELPLGIPGLESLELNNLVDCNELLVCVKNNGAVVWNPWLGQSRWIQPSLNHSPMVFDGIVYDNKKYKMVAFSGLWKIYDFSSDVWIDHKSKSTNSNTNVINVQTAVCLNGNLYWVCFREKTDPLCYHIHKFGFSNSIWVRFCNLPFGRNHDGDALVLGVFRGDRFSLLKQCMVTKKIEVFVTENKINHENGDDVVWKNFMTFSSPNLPDLVETVKFSNPSYFIEGKRLVVCSRDNTGHAWIYILGDSKLISKTRIECVVDPWPLHCTFVPSLVPVPAPCRREEQAELQV.

Residues 1-47 form the F-box domain; the sequence is MAHLKNLPWELIEEILSRVPPKSLVRFRTVSKQWNALFDDKTFINNH.

This Arabidopsis thaliana (Mouse-ear cress) protein is F-box protein At2g14710.